The sequence spans 1029 residues: MKYDMNHRKNSDDTPPASRTVKEMMAEFQNKLDDGDNRFRKQPPPPPSPRRAPPPPPHRKPASLSPPPDDENTIRPPSSSESSENIPEEPQELITPNTTRRSLGPKPTVAPKPLFLNGLLPSSSTSDVSSQNSPKCDPHPSCTTPTILVSPATSEYSNGVFFGANETNGSGVKDRARQLVNMGFVPRMQNGGTGTPSERPISQVSTLSQVSDEFDEGDTSASDEESMNSEKHLRRHRHEDDFDELPLPKNERKTTTVAATHSEIMNEMEHLFVRGGKKNNGVHKQQRRQSNIDEIPSDVGKLRDNRKGRHNSLFVSPTSGMSSSSTDDFSRITSMTSDRSSILTSHSGGEDSTDGASPVPDYETGDEKDDQRLKKLHYAAVEFLKVQNNYVQYLKEMAVLYPEYMERFGKRVGRDLLASHNGHENVVLQIKKIMVQILPIHEMLLKEIDKVCSNWDSRYPNMSKTIGTFADFLKCCQPFLDNKADFLNKLLQLRNEDKEFDEATYMFETEVFKRGKKGAVIQQLDQVHQNFMRYKLLMLRYSEYLIDDCDEKEKAQEAIQKLENVTQAVNQKMGLPTTEELTKLYYRFQCQFNVLEPGRVLIRQSEVMKQTRKELQPRYLVLFTDYLWICRVSSSGQFDINRSYRIPLEYMKFERMEEDERIRCLQIRSRVKSALIIFSSEKERNQWTDDLTKAQYDRKSYKRRQSTAVQRHDENKKKMNKLLMLTPEVPDASDLERPQLIDSRSRSMSCESQDELSSVPVTPLDNGEIDETLGFGEVTRNGSGKKPPSEMIKPVWLPDNISNECLMEGCSTEFNIINRRHHCRDCGWLICKFCKGQAPLSKYDFTKQNVCSECFDRHYKAYKDGVLFPSKNMIVQSDETILVKIGKRNDKEIVDPRKLFKAPVNYGFRHRNVEEKRAQSIVFGRVYLSFRSRKTETVRHALLRRDDLKLVFYKAELDSKSVLELLIYGYFYRETPLDDGWLFELVHRNQIRTDDTKDDVISFRVDNSASAKKWSAAFADKLELDPTRG.

Composition is skewed to basic and acidic residues over residues 1–12 (MKYDMNHRKNSD) and 20–39 (TVKE…DNRF). Disordered stretches follow at residues 1–155 (MKYD…ATSE), 185–254 (VPRM…ERKT), and 279–370 (NNGV…EKDD). The span at 42-56 (QPPPPPSPRRAPPPP) shows a compositional bias: pro residues. Low complexity-rich tracts occupy residues 76–85 (PPSSSESSEN) and 122–133 (SSSTSDVSSQNS). Polar residues-rich tracts occupy residues 141–155 (SCTT…ATSE) and 200–211 (PISQVSTLSQVS). Residues 212-227 (DEFDEGDTSASDEESM) are compositionally biased toward acidic residues. Low complexity predominate over residues 316–334 (SPTSGMSSSSTDDFSRITS). Positions 335-347 (MTSDRSSILTSHS) are enriched in polar residues. The DH domain occupies 375-572 (KLHYAAVEFL…ENVTQAVNQK (198 aa)). In terms of domain architecture, PH spans 593 to 696 (NVLEPGRVLI…WTDDLTKAQY (104 aa)). Zn(2+)-binding residues include cysteine 810, cysteine 823, cysteine 826, cysteine 831, cysteine 834, cysteine 851, and cysteine 854. An FYVE-type; degenerate zinc finger spans residues 810-859 (CSTEFNIINRRHHCRDCGWLICKFCKGQAPLSKYDFTKQNVCSECFDRHY).

The protein localises to the cytoplasm. It localises to the cytoskeleton. Activates cdc-42, a member of the Ras-like family of Rho- and Rac proteins, by exchanging bound GDP for free GTP. May play a role in regulating the actin cytoskeleton and cell shape. Required for normal lifespan. In Caenorhabditis elegans, this protein is FYVE, RhoGEF and PH domain-containing protein tag-77.